An 80-amino-acid polypeptide reads, in one-letter code: Metallothionein-like protein type 2, MT2-22 (80 aa).

This sequence belongs to the metallothionein superfamily. Type 15 family.

In terms of biological role, metallothioneins have a high content of cysteine residues that bind various heavy metals. The chain is Metallothionein-like protein type 2, MT2-22 from Brassica juncea (Indian mustard).